The following is a 233-amino-acid chain: MLTRKQYELLRFINERLKESGVPPSFDEMKDALDLRSKSGIHRLITALEERGFIRRLPNRARAIEVIKLPEVAGNGGGRRGFTPSVIEGNLGKVRPSGGGVVDDAERPVAVPVMGRIAAGTPIEALQTRSHTISVPPDMLGSGEHYALEVRGDSMVEAGILDGDMALIQRNETAETGDIVVALIDDEEATLKRFRRRGASIALEPANTAYEVRILPPNRVQIQGKLIGIYRKY.

The H-T-H motif DNA-binding region spans 26–46 (FDEMKDALDLRSKSGIHRLIT). Catalysis depends on for autocatalytic cleavage activity residues S154 and K192.

The protein belongs to the peptidase S24 family. As to quaternary structure, homodimer.

It carries out the reaction Hydrolysis of Ala-|-Gly bond in repressor LexA.. Its function is as follows. Represses a number of genes involved in the response to DNA damage (SOS response), including recA and lexA. In the presence of single-stranded DNA, RecA interacts with LexA causing an autocatalytic cleavage which disrupts the DNA-binding part of LexA, leading to derepression of the SOS regulon and eventually DNA repair. This is LexA repressor from Nitrobacter hamburgensis (strain DSM 10229 / NCIMB 13809 / X14).